The following is a 94-amino-acid chain: MSSNVLDTLYSIILDRISNKKEGSYTVKLLEKGKPYIARKVGEEATEVIVASLSEGRERFISEVADLIYHLFVLMAVEGVKPEDVYEELKRRMK.

The protein belongs to the PRA-PH family.

It localises to the cytoplasm. The enzyme catalyses 1-(5-phospho-beta-D-ribosyl)-ATP + H2O = 1-(5-phospho-beta-D-ribosyl)-5'-AMP + diphosphate + H(+). It participates in amino-acid biosynthesis; L-histidine biosynthesis; L-histidine from 5-phospho-alpha-D-ribose 1-diphosphate: step 2/9. This is Phosphoribosyl-ATP pyrophosphatase (hisE) from Sulfurisphaera tokodaii (strain DSM 16993 / JCM 10545 / NBRC 100140 / 7) (Sulfolobus tokodaii).